Here is a 437-residue protein sequence, read N- to C-terminus: Trigger factor (437 aa).

The 86-residue stretch at 163 to 248 folds into the PPIase FKBP-type domain; that stretch reads SDRVIIDFEG…LNNVSEATLP (86 aa).

It belongs to the FKBP-type PPIase family. Tig subfamily.

The protein resides in the cytoplasm. The enzyme catalyses [protein]-peptidylproline (omega=180) = [protein]-peptidylproline (omega=0). Involved in protein export. Acts as a chaperone by maintaining the newly synthesized protein in an open conformation. Functions as a peptidyl-prolyl cis-trans isomerase. This is Trigger factor from Neisseria meningitidis serogroup C / serotype 2a (strain ATCC 700532 / DSM 15464 / FAM18).